The chain runs to 1085 residues: Ankyrin repeat and IBR domain-containing protein 1 (1085 aa).

Residue G2 is the site of N-myristoyl glycine attachment. 2 ANK repeats span residues 45-75 (QHNT…NPNK) and 145-174 (KKNT…DLFA). The interval 282-322 (CQRSGVQMPTPPPSGYNAWDTLPSPRTPRTTRSSVTSPDEI) is disordered. Residues 304–319 (PSPRTPRTTRSSVTSP) show a composition bias toward low complexity. The TRIAD supradomain stretch occupies residues 330–570 (DTSLCDICMC…GGYYRCTRYE (241 aa)). The Zn(2+) site is built by C334, C337, C352, H354, C357, C360, C379, C384, C466, C469, H474, C479, C520, and C523. The RING-type 1 zinc finger occupies 334-384 (CDICMCSISVFEDPVDMPCGHDFCRGCWEAFLNLKIQEGEAHNIFCPAYEC). The IBR-type zinc finger occupies 402-479 (DKRYLQFDIK…LGEAHEPCDC (78 aa)). The RING-type 2; atypical zinc finger occupies 520 to 549 (CANCKSPIQKNEGCNHMQCAKCKYDFCWIC). C533 is a catalytic residue. C538, C541, C546, C549, H556, and C566 together coordinate Zn(2+). Residues 576-641 (EEQSKEMTVE…RALKETEGGC (66 aa)) adopt a coiled-coil conformation. At S738 the chain carries Phosphoserine. Residues 764-808 (RRRHRQQRRRGDVHSLLSNPTDLDEPSESTFDLPEGSSGRRPGAS) are disordered. The UIM domain maps to 846-865 (EDDPNILLAIQLSLQESGLD). A phosphoserine mark is found at S879 and S906. Disordered regions lie at residues 884-907 (GSSL…ALSS), 921-959 (GADS…QDPS), and 1014-1085 (PPED…VHSV). Over residues 926 to 959 (PFSTDTLSSRPLSETRSDFCPSSSDLDSAGQDPS) the composition is skewed to polar residues. Residues 1018–1033 (SVSKDTGVHEGERAQM) are compositionally biased toward basic and acidic residues. Residues 1068 to 1085 (ASQTPQTSSDWLEQVHSV) are compositionally biased toward polar residues.

It belongs to the RBR family.

It carries out the reaction [E2 ubiquitin-conjugating enzyme]-S-ubiquitinyl-L-cysteine + [acceptor protein]-L-lysine = [E2 ubiquitin-conjugating enzyme]-L-cysteine + [acceptor protein]-N(6)-ubiquitinyl-L-lysine.. Functionally, might act as an E3 ubiquitin-protein ligase, or as part of E3 complex, which accepts ubiquitin from specific E2 ubiquitin-conjugating enzymes and then transfers it to substrates. This is Ankyrin repeat and IBR domain-containing protein 1 (Ankib1) from Mus musculus (Mouse).